Consider the following 444-residue polypeptide: Ribitol-5-phosphate xylosyltransferase 1 (444 aa).

Topologically, residues 1–9 (MRLTRTRLC) are cytoplasmic. Residues 10–30 (SLLVALYCLFSIYAAYHVFFG) traverse the membrane as a helical; Signal-anchor for type II membrane protein segment. Residues 31–444 (RRRRPLGTTS…ESSFFINNKV (414 aa)) are Extracellular-facing. The interval 38–79 (TTSRNSRKAAAAQAKERRGREQSALESEEWNPWEGDEKNEQR) is disordered. Positions 51–60 (AKERRGREQS) are enriched in basic and acidic residues.

This sequence belongs to the RXYLT1 family. In terms of assembly, forms a complex composed of FKTN/fukutin, FKRP and RXYLT1/TMEM5.

Its subcellular location is the golgi apparatus membrane. The enzyme catalyses 3-O-[Rib-ol-P-Rib-ol-P-3-beta-D-GalNAc-(1-&gt;3)-beta-D-GlcNAc-(1-&gt;4)-(O-6-P-alpha-D-Man)]-Thr-[protein] + UDP-alpha-D-xylose = 3-O-[beta-D-Xyl-(1-&gt;4)-Rib-ol-P-Rib-ol-P-3-beta-D-GalNAc-(1-&gt;3)-beta-D-GlcNAc-(1-&gt;4)-(O-6-P-alpha-D-Man)]-Thr-[protein] + UDP + H(+). The protein operates within protein modification; protein glycosylation. Its function is as follows. Acts as a UDP-D-xylose:ribitol-5-phosphate beta1,4-xylosyltransferase, which catalyzes the transfer of UDP-D-xylose to ribitol 5-phosphate (Rbo5P) to form the Xylbeta1-4Rbo5P linkage on O-mannosyl glycan. Participates in the biosynthesis of the phosphorylated O-mannosyl trisaccharide (N-acetylgalactosamine-beta-3-N-acetylglucosamine-beta-4-(phosphate-6-)mannose), a carbohydrate structure present in alpha-dystroglycan (DAG1), which is required for binding laminin G-like domain-containing extracellular proteins with high affinity. The sequence is that of Ribitol-5-phosphate xylosyltransferase 1 from Mus musculus (Mouse).